A 1173-amino-acid chain; its full sequence is Tectonin beta-propeller repeat-containing protein 1 (1173 aa).

TECPR repeat units lie at residues 209–240 (LSVWAASLQGKVWYREDVCQNIPEGSSWTELE), 254–285 (DLLWASLWEGQAMVREGINRNNPKGSSWTIVE), 301–332 (NVVWAVTKDRKVWFRRGVNSHNPCGTGWIEMV), and 344–376 (DQVFGVGYEDRAVYFRQGVTPSELSGKAWKSIV). A disordered region spans residues 403–489 (IKEHSDSPIP…AGPVPKAGAP (87 aa)). Residues 409–422 (SPIPSDIESSSEPE) show a composition bias toward low complexity. Over residues 424-434 (SAVQENSSDSS) the composition is skewed to polar residues. The region spanning 609 to 718 (VWVKTGALQW…WLVLLSMSCY (110 aa)) is the PH domain. TECPR repeat units lie at residues 730–757 (QAIWSVTCKGDIFVSEPKADLESVTNGR), 952–983 (IALWAISNKGDVLCRLGVTKQSPSGSSWLHVG), 997–1028 (LQVWAIARDGSAFYRGSVSPAQPAGDCWYHIP), 1043–1074 (TSVFVVDENGNLWFRHGITPTYPQGTTWEHMS), and 1086–1126 (DQIW…DYGI). Residues 1147-1173 (QPKENATEKPDPQEENGESAFSHIANC) form a disordered region.

This sequence belongs to the TECPR1 family.

Its subcellular location is the cytoplasmic vesicle. The protein resides in the autophagosome membrane. It is found in the lysosome membrane. Tethering factor involved in autophagy. Involved in autophagosome maturation by promoting the autophagosome fusion with lysosomes. Binds phosphatidylinositol-3-phosphate (PtdIns(3)P) present at the surface of autophagosomes. This chain is Tectonin beta-propeller repeat-containing protein 1 (tecpr1), found in Xenopus tropicalis (Western clawed frog).